The following is a 97-amino-acid chain: Aspartyl/glutamyl-tRNA(Asn/Gln) amidotransferase subunit C (97 aa).

This sequence belongs to the GatC family. Heterotrimer of A, B and C subunits.

It carries out the reaction L-glutamyl-tRNA(Gln) + L-glutamine + ATP + H2O = L-glutaminyl-tRNA(Gln) + L-glutamate + ADP + phosphate + H(+). The catalysed reaction is L-aspartyl-tRNA(Asn) + L-glutamine + ATP + H2O = L-asparaginyl-tRNA(Asn) + L-glutamate + ADP + phosphate + 2 H(+). Its function is as follows. Allows the formation of correctly charged Asn-tRNA(Asn) or Gln-tRNA(Gln) through the transamidation of misacylated Asp-tRNA(Asn) or Glu-tRNA(Gln) in organisms which lack either or both of asparaginyl-tRNA or glutaminyl-tRNA synthetases. The reaction takes place in the presence of glutamine and ATP through an activated phospho-Asp-tRNA(Asn) or phospho-Glu-tRNA(Gln). In Anaeromyxobacter dehalogenans (strain 2CP-C), this protein is Aspartyl/glutamyl-tRNA(Asn/Gln) amidotransferase subunit C.